The chain runs to 330 residues: GTPase Obg (330 aa).

The Obg domain maps to 1-159 (MHFIDEVKIY…MWIHLSLKLL (159 aa)). One can recognise an OBG-type G domain in the interval 160–327 (SDVGLVGFPN…IVKLALETIK (168 aa)). Residues 166-173 (GFPNAGKS), 191-195 (FTTLV), 212-215 (DIPG), 279-282 (NKCD), and 308-310 (STY) contribute to the GTP site. Mg(2+) is bound by residues S173 and T193.

It belongs to the TRAFAC class OBG-HflX-like GTPase superfamily. OBG GTPase family. Monomer. Mg(2+) serves as cofactor.

Its subcellular location is the cytoplasm. An essential GTPase which binds GTP, GDP and possibly (p)ppGpp with moderate affinity, with high nucleotide exchange rates and a fairly low GTP hydrolysis rate. Plays a role in control of the cell cycle, stress response, ribosome biogenesis and in those bacteria that undergo differentiation, in morphogenesis control. This Rickettsia massiliae (strain Mtu5) protein is GTPase Obg.